Reading from the N-terminus, the 62-residue chain is uncharacterized protein (62 aa).

Positions 28-61 form a coiled coil; that stretch reads KIESTHPEIAKKLKEAAEKYREVEEILKKAVDMV.

This is an uncharacterized protein from Archaeoglobus fulgidus (strain ATCC 49558 / DSM 4304 / JCM 9628 / NBRC 100126 / VC-16).